A 614-amino-acid chain; its full sequence is Vitamin B12 transporter BtuB (614 aa).

Residues 1–20 (MIKKASLLTACSVTAFSAWA) form the signal peptide. A TonB box motif is present at residues 26–33 (DTLVVTAN). In terms of domain architecture, TBDR plug spans 38-152 (PRSTVLAPTT…IGGVVNIITT (115 aa)). Cyanocob(III)alamin contacts are provided by residues leucine 83, serine 85, asparagine 92, and 110-111 (VS). The 460-residue stretch at 155 to 614 (EPGTEISAGW…EYTLSGSYTF (460 aa)) folds into the TBDR beta-barrel domain. A run of 3 beta stranded transmembrane segments spans residues 158-165 (TEISAGWG), 169-178 (YQNYDVSTQQ), and 184-195 (TRVTLLGDYAHT). Residues aspartate 199, glutamine 211, aspartate 213, and aspartate 215 each contribute to the Ca(2+) site. A run of 2 beta stranded transmembrane segments spans residues 217–227 (FLSKTLYGALE) and 232–248 (DAWS…NRTN). Ca(2+)-binding residues include tyrosine 249 and aspartate 250. Residue alanine 251 coordinates cyanocob(III)alamin. Aspartate 261 provides a ligand contact to Ca(2+). The next 14 beta stranded transmembrane spans lie at 263-277 (RKLY…LRYN), 279-296 (ELIK…KDYN), 309-325 (TLDE…NNVI), 328-337 (HGSIGAGVDW), 353-369 (YDQR…QQVG), 371-381 (FTFEGAARNDD), 385-400 (FGRH…WEFI), 403-417 (YRFI…KAPN), 434-443 (KSKQWEGAFE), 449-458 (VNWRISGYRN), 473-490 (YYNE…TANF), 494-509 (PLTH…ARNA), 517-529 (RRAK…QLDW), and 535-550 (DWGI…YDKD). Threonine 309 contributes to the cyanocob(III)alamin binding site. Residue arginine 517 participates in cyanocob(III)alamin binding. Tyrosine 551 is a cyanocob(III)alamin binding site. Beta stranded transmembrane passes span 558–572 (TVKM…LAVA), 585–596 (IANLFDKDYETV), and 602–614 (AGRE…SYTF). The TonB C-terminal box motif lies at 597 to 614 (YGYQTAGREYTLSGSYTF).

The protein belongs to the TonB-dependent receptor family. BtuB (TC 1.B.14.3.1) subfamily.

The protein localises to the cell outer membrane. Its function is as follows. Involved in the active translocation of vitamin B12 (cyanocobalamin) across the outer membrane to the periplasmic space. It derives its energy for transport by interacting with the trans-periplasmic membrane protein TonB. The polypeptide is Vitamin B12 transporter BtuB (Escherichia coli O139:H28 (strain E24377A / ETEC)).